A 248-amino-acid polypeptide reads, in one-letter code: Probable transcriptional regulatory protein blr1534 (248 aa).

A disordered region spans residues methionine 1–lysine 21.

Belongs to the TACO1 family.

It localises to the cytoplasm. This Bradyrhizobium diazoefficiens (strain JCM 10833 / BCRC 13528 / IAM 13628 / NBRC 14792 / USDA 110) protein is Probable transcriptional regulatory protein blr1534.